Consider the following 579-residue polypeptide: Arginine--tRNA ligase (579 aa).

A 'HIGH' region motif is present at residues 127–137 (PNLAKEMHVGH).

The protein belongs to the class-I aminoacyl-tRNA synthetase family. As to quaternary structure, monomer.

The protein localises to the cytoplasm. The catalysed reaction is tRNA(Arg) + L-arginine + ATP = L-arginyl-tRNA(Arg) + AMP + diphosphate. This is Arginine--tRNA ligase from Ectopseudomonas mendocina (strain ymp) (Pseudomonas mendocina).